Here is an 861-residue protein sequence, read N- to C-terminus: Leucine--tRNA ligase (861 aa).

A 'HIGH' region motif is present at residues 42-52 (PYPSGKLHMGH). The 'KMSKS' region motif lies at 620–624 (KMSKS). Residue lysine 623 coordinates ATP.

It belongs to the class-I aminoacyl-tRNA synthetase family.

It localises to the cytoplasm. The enzyme catalyses tRNA(Leu) + L-leucine + ATP = L-leucyl-tRNA(Leu) + AMP + diphosphate. This Hahella chejuensis (strain KCTC 2396) protein is Leucine--tRNA ligase.